Consider the following 82-residue polypeptide: MATFPPATSAPQQPPGPEDEDSSLDESDLYSLAHSYLGGGGRKGRTKREAAANTNRPSPGGHERKLVTKLQNSERKKRGARR.

Residues 1-82 (MATFPPATSA…SERKKRGARR (82 aa)) are disordered. A compositionally biased stretch (acidic residues) spans 17–28 (PEDEDSSLDESD). The Nuclear localization signal motif lies at 65–82 (KLVTKLQNSERKKRGARR).

This sequence belongs to the NUPR family. In terms of assembly, monomer. Directly interacts with MSL1 and binds MORF4L1, two components of histone acetyltransferase complex; the interaction with MORF4L1 may be mediated by MSL1. Interacts with EP300; this interaction enhances the effect of EP300 on PAX2 transcription factor activity. Interacts with PAXIP1; this interaction prevents PAXIP1 inhibition of PAX2 transcription factor activity. Interacts with COPS5; this interaction allows COPS5-dependent CDKN1B nuclear to cytoplasm translocation. Interacts with RNF2. Interacts with FOXO3; this interaction represses FOXO3 transactivation. Interacts with PTMA; negatively regulates apoptotic process. Interacts with MYOD1, EP300 and DDX5; this interaction coordinates the association of anti-proliferative and pro-myogenic proteins at the myogenin promoter. Interacts with TP53; interaction is stress-dependent. Forms a complex with EP300 and TP53; this complex binds CDKN1A promoter leading to transcriptional induction of CDKN1A. Phosphorylated in vitro by PKA and CK. Phosphorylation promotes DNA-binding activity. Post-translationally, acetylated by EP300 in vitro. In terms of tissue distribution, widely expressed, with high levels in liver, pancreas, prostate, ovary, colon, thyroid, spinal cord, trachea and adrenal gland, moderate levels in heart, placenta, lung, skeletal muscle, kidney, testis, small intestine, stomach and lymph node, and low levels in brain, spleen, thymus and bone marrow. Not detected in peripheral blood leukocytes.

The protein resides in the nucleus. Its subcellular location is the cytoplasm. It is found in the perinuclear region. In terms of biological role, transcription regulator that converts stress signals into a program of gene expression that empowers cells with resistance to the stress induced by a change in their microenvironment. Thereby participates in the regulation of many processes namely cell-cycle, apoptosis, autophagy and DNA repair responses. Controls cell cycle progression and protects cells from genotoxic stress induced by doxorubicin through the complex formation with TP53 and EP300 that binds CDKN1A promoter leading to transcriptional induction of CDKN1A. Protects pancreatic cancer cells from stress-induced cell death by binding the RELB promoter and activating its transcription, leading to IER3 transactivation. Negatively regulates apoptosis through interaction with PTMA. Inhibits autophagy-induced apoptosis in cardiac cells through FOXO3 interaction, inducing cytoplasmic translocation of FOXO3 thereby preventing the FOXO3 association with the pro-autophagic BNIP3 promoter. Inhibits cell growth and facilitates programmed cell death by apoptosis after adriamycin-induced DNA damage through transactivation of TP53. Regulates methamphetamine-induced apoptosis and autophagy through DDIT3-mediated endoplasmic reticulum stress pathway. Participates in DNA repair following gamma-irradiation by facilitating DNA access of the transcription machinery through interaction with MSL1 leading to inhibition of histone H4' Lys-16' acetylation (H4K16ac). Coactivator of PAX2 transcription factor activity, both by recruiting EP300 to increase PAX2 transcription factor activity and by binding PAXIP1 to suppress PAXIP1-induced inhibition on PAX2. Positively regulates cell cycle progression through interaction with COPS5 inducing cytoplasmic translocation of CDKN1B leading to the CDKN1B degradation. Coordinates, through its interaction with EP300, the assiociation of MYOD1, EP300 and DDX5 to the MYOG promoter, leading to inhibition of cell-cycle progression and myogenic differentiation promotion. Negatively regulates beta cell proliferation via inhibition of cell-cycle regulatory genes expression through the suppression of their promoter activities. Also required for LHB expression and ovarian maturation. Exacerbates CNS inflammation and demyelination upon cuprizone treatment. This is Nuclear protein 1 from Homo sapiens (Human).